The following is a 1011-amino-acid chain: RAS protein activator like-3 (1011 aa).

The interval 1–38 (MDPPSPSRTSQTQPTATSPLTSYRWHTGGGGEKAAGGF) is disordered. Residues 7 to 22 (SRTSQTQPTATSPLTS) show a composition bias toward low complexity. S18 and S51 each carry phosphoserine. Disordered regions lie at residues 52–136 (HQEP…PVWD), 151–197 (GGEE…GPNQ), and 209–230 (KEKK…GSRE). Over residues 81–95 (SRLRLSKALWGRHKN) the composition is skewed to basic residues. Residues 100–117 (PDPEPEQEAPELEPEPEL) are compositionally biased toward acidic residues. Residues 118-131 (EPPTPQIPEAPTPN) show a composition bias toward pro residues. S164, S166, S167, and S170 each carry phosphoserine. Positions 179–190 (RDPDRMPGKTEP) are enriched in basic and acidic residues. The region spanning 197-293 (QVHNVRGLLK…WIEDLRRQFQ (97 aa)) is the PH domain. S224, S228, and S231 each carry phosphoserine. T234 is modified (phosphothreonine). Residues 284–404 (WIEDLRRQFQ…APAAGLERWF (121 aa)) form the C2 domain. In terms of domain architecture, Ras-GAP spans 474–682 (GRAQALVTDL…PAMQCFLDQV (209 aa)). Disordered regions lie at residues 756–885 (QVHS…LGTH) and 987–1011 (LSPR…GDTT). S787 and S790 each carry phosphoserine. Over residues 792–808 (RRSESWARPRPDEERPL) the composition is skewed to basic and acidic residues. Composition is skewed to polar residues over residues 871-882 (QMDQPQDRNQAL) and 987-999 (LSPR…SQPQ). Positions 888–988 (VNKLAELQCE…RDAVQSLQLS (101 aa)) form a coiled coil. The residue at position 988 (S988) is a Phosphoserine.

Predominantly expressed in cells of hematopoietic lineages.

The protein localises to the cytoplasm. It is found in the cell cortex. In terms of biological role, functions as a Ras GTPase-activating protein. Plays an important role in the expansion and functions of natural killer T (NKT) cells in the liver by negatively regulating RAS activity and the down-stream ERK signaling pathway. The chain is RAS protein activator like-3 (RASAL3) from Homo sapiens (Human).